Reading from the N-terminus, the 179-residue chain is uncharacterized protein (179 aa).

Positions 1–10 (ATLSAGQPAS) are enriched in polar residues. 3 disordered regions span residues 1 to 35 (ATLS…RGKC), 59 to 80 (VRRN…PIVT), and 131 to 179 (ECPT…STCR). Residues 23–33 (LHRHPAPKRRG) are compositionally biased toward basic residues. Residues 149 to 158 (TPSRVRRSRR) are compositionally biased toward basic residues.

This is an uncharacterized protein from Human cytomegalovirus (strain AD169) (HHV-5).